Consider the following 394-residue polypeptide: Tyrosine--tRNA ligase, cytoplasmic (394 aa).

S2 is subject to N-acetylserine. Y43 provides a ligand contact to L-tyrosine. Residues 48 to 56 (PTGRPHCGY) carry the 'HIGH' region motif. L-tyrosine contacts are provided by Y170, Q174, D177, and Q192. The 'KMSKS' region signature appears at 227-231 (KMSAS). Residue S235 is modified to Phosphoserine. Positions 348 to 394 (QEASEKGYPVATPQKSKKAKKPKNKGTKYPGATKTNEIATKLEETKL) are disordered. The residue at position 359 (T359) is a Phosphothreonine. Positions 360-378 (PQKSKKAKKPKNKGTKYPG) match the Nuclear localization signal motif. Basic residues predominate over residues 362 to 373 (KSKKAKKPKNKG).

Belongs to the class-I aminoacyl-tRNA synthetase family. As to quaternary structure, homodimer. Interacts with KNR4/SMI1.

It localises to the cytoplasm. The protein resides in the nucleus. It catalyses the reaction tRNA(Tyr) + L-tyrosine + ATP = L-tyrosyl-tRNA(Tyr) + AMP + diphosphate + H(+). Its activity is regulated as follows. Inhibited by N-ethylmaleimide and p-chloromercuribenzoate. Functionally, catalyzes the attachment of L-tyrosine to tRNA(Tyr) in a two-step reaction: L-tyrosine is first activated by ATP to form Tyr-AMP and then transferred to the acceptor end of tRNA(Tyr). The specificity determinants on tRNA(Tyr) are the base pair C1-G72, the discriminator residue A73, and the three anticodon bases G34, U35 and A36. Also involved in nuclear tRNA export. Also attaches D-Tyr to tRNA(Tyr), this reaction is about 150-fold less efficient than attachment of L-Tyr. This Saccharomyces cerevisiae (strain ATCC 204508 / S288c) (Baker's yeast) protein is Tyrosine--tRNA ligase, cytoplasmic.